A 367-amino-acid polypeptide reads, in one-letter code: Phospho-N-acetylmuramoyl-pentapeptide-transferase (367 aa).

The next 10 membrane-spanning stretches (helical) occupy residues 16–36, 62–82, 87–107, 125–145, 158–178, 190–210, 214–234, 240–260, 264–284, and 326–346; these read LLLA…WVRF, TMGG…FNLV, MLLP…DDWL, FWIM…PQPY, VGEV…IVFI, SLAG…TFLA, LTNL…FLWY, QVFM…VVAL, QWLL…STMI, and FVLI…IFGP.

The protein belongs to the glycosyltransferase 4 family. MraY subfamily. Mg(2+) is required as a cofactor.

It is found in the cell membrane. The enzyme catalyses UDP-N-acetyl-alpha-D-muramoyl-L-alanyl-gamma-D-glutamyl-meso-2,6-diaminopimeloyl-D-alanyl-D-alanine + di-trans,octa-cis-undecaprenyl phosphate = di-trans,octa-cis-undecaprenyl diphospho-N-acetyl-alpha-D-muramoyl-L-alanyl-D-glutamyl-meso-2,6-diaminopimeloyl-D-alanyl-D-alanine + UMP. The protein operates within cell wall biogenesis; peptidoglycan biosynthesis. Catalyzes the initial step of the lipid cycle reactions in the biosynthesis of the cell wall peptidoglycan: transfers peptidoglycan precursor phospho-MurNAc-pentapeptide from UDP-MurNAc-pentapeptide onto the lipid carrier undecaprenyl phosphate, yielding undecaprenyl-pyrophosphoryl-MurNAc-pentapeptide, known as lipid I. This Chloroflexus aurantiacus (strain ATCC 29366 / DSM 635 / J-10-fl) protein is Phospho-N-acetylmuramoyl-pentapeptide-transferase.